The following is a 146-amino-acid chain: MNSLSIFFIVVATAAVCLLFIQGYSIYENYGNIKEFNATHAAFEYSKSIGGTPALDRRVQDVNDTISDVKQKWRCVAYPGNGFVSASIFGFQAEVGPNNTRSIRKFNTMAQCIDFTFSDVINIDIYNPCVAPNINNVECQFLKSVL.

The chain crosses the membrane as a helical; Signal-anchor for type III membrane protein span at residues 1–21; that stretch reads MNSLSIFFIVVATAAVCLLFI. At 22–146 the chain is on the intravirion side; that stretch reads QGYSIYENYG…VECQFLKSVL (125 aa).

It belongs to the orthopoxvirus OPG155 protein family. Part of a stable entry-fusion complex (EFC) which is at least composed of proteins OPG143, OPG147, OPG155, OPG086, OPG094, OPG107, OPG104, and OPG099. Formation of the viral membrane is necessary for the assembly of the complex. Interacts directly with protein OPG107. In terms of processing, contains two intramolecular disulfide bonds. They are created by the viral disulfide bond formation pathway, a poxvirus-specific pathway that operates on the cytoplasmic side of the MV membranes.

The protein localises to the virion membrane. Functionally, envelope protein required for virus entry into host cell and for cell-cell fusion (syncytium formation). This is Envelope protein OPG155 (OPG155) from Variola virus (isolate Human/India/Ind3/1967) (VARV).